A 233-amino-acid polypeptide reads, in one-letter code: LexA repressor (233 aa).

A DNA-binding region (H-T-H motif) is located at residues 26–46; it reads FDEMKDALDLRSKSGIHRLIT. Residues S154 and K192 each act as for autocatalytic cleavage activity in the active site.

The protein belongs to the peptidase S24 family. As to quaternary structure, homodimer.

It carries out the reaction Hydrolysis of Ala-|-Gly bond in repressor LexA.. In terms of biological role, represses a number of genes involved in the response to DNA damage (SOS response), including recA and lexA. In the presence of single-stranded DNA, RecA interacts with LexA causing an autocatalytic cleavage which disrupts the DNA-binding part of LexA, leading to derepression of the SOS regulon and eventually DNA repair. This is LexA repressor from Nitrobacter winogradskyi (strain ATCC 25391 / DSM 10237 / CIP 104748 / NCIMB 11846 / Nb-255).